A 379-amino-acid polypeptide reads, in one-letter code: Arginine biosynthesis bifunctional protein ArgJ (379 aa).

Substrate contacts are provided by T141, K163, T174, E252, N374, and T379. The active-site Nucleophile is T174.

It belongs to the ArgJ family. As to quaternary structure, heterotetramer of two alpha and two beta chains.

It localises to the cytoplasm. It carries out the reaction N(2)-acetyl-L-ornithine + L-glutamate = N-acetyl-L-glutamate + L-ornithine. The catalysed reaction is L-glutamate + acetyl-CoA = N-acetyl-L-glutamate + CoA + H(+). Its pathway is amino-acid biosynthesis; L-arginine biosynthesis; L-ornithine and N-acetyl-L-glutamate from L-glutamate and N(2)-acetyl-L-ornithine (cyclic): step 1/1. It functions in the pathway amino-acid biosynthesis; L-arginine biosynthesis; N(2)-acetyl-L-ornithine from L-glutamate: step 1/4. Catalyzes two activities which are involved in the cyclic version of arginine biosynthesis: the synthesis of N-acetylglutamate from glutamate and acetyl-CoA as the acetyl donor, and of ornithine by transacetylation between N(2)-acetylornithine and glutamate. This Aquifex aeolicus (strain VF5) protein is Arginine biosynthesis bifunctional protein ArgJ.